The primary structure comprises 136 residues: Small ribosomal subunit protein uS11c (136 aa).

Belongs to the universal ribosomal protein uS11 family. In terms of assembly, part of the 30S ribosomal subunit.

The protein localises to the plastid. This chain is Small ribosomal subunit protein uS11c, found in Epifagus virginiana (Beechdrops).